The primary structure comprises 180 residues: NAD(P)H-quinone oxidoreductase subunit I, chloroplastic (180 aa).

4Fe-4S ferredoxin-type domains follow at residues 55–84 (GRIH…VDWR) and 95–124 (LNYS…MTEE). [4Fe-4S] cluster contacts are provided by cysteine 64, cysteine 67, cysteine 70, cysteine 74, cysteine 104, cysteine 107, cysteine 110, and cysteine 114.

It belongs to the complex I 23 kDa subunit family. NDH is composed of at least 16 different subunits, 5 of which are encoded in the nucleus. [4Fe-4S] cluster is required as a cofactor.

Its subcellular location is the plastid. The protein localises to the chloroplast thylakoid membrane. It carries out the reaction a plastoquinone + NADH + (n+1) H(+)(in) = a plastoquinol + NAD(+) + n H(+)(out). The catalysed reaction is a plastoquinone + NADPH + (n+1) H(+)(in) = a plastoquinol + NADP(+) + n H(+)(out). Functionally, NDH shuttles electrons from NAD(P)H:plastoquinone, via FMN and iron-sulfur (Fe-S) centers, to quinones in the photosynthetic chain and possibly in a chloroplast respiratory chain. The immediate electron acceptor for the enzyme in this species is believed to be plastoquinone. Couples the redox reaction to proton translocation, and thus conserves the redox energy in a proton gradient. In Triticum aestivum (Wheat), this protein is NAD(P)H-quinone oxidoreductase subunit I, chloroplastic.